The chain runs to 407 residues: Succinate--CoA ligase [ADP-forming] subunit beta, hydrogenosomal (407 aa).

A hydrogenosome-targeting transit peptide spans Met1–Asn9. Residues Lys18 to Arg261 enclose the ATP-grasp domain. Residues Lys55, Gly62 to Gly64, and Glu124 each bind ATP. Residues Asn216 and Asp230 each coordinate Mg(2+). Substrate contacts are provided by residues Asn281 and Gly338–Val340.

This sequence belongs to the succinate/malate CoA ligase beta subunit family. In terms of assembly, heterodimer of an alpha and a beta subunit. Mg(2+) serves as cofactor.

Its subcellular location is the hydrogenosome. It catalyses the reaction succinate + ATP + CoA = succinyl-CoA + ADP + phosphate. The protein operates within carbohydrate metabolism; tricarboxylic acid cycle; succinate from succinyl-CoA (ligase route): step 1/1. Its function is as follows. Succinyl-CoA synthetase functions in the citric acid cycle (TCA), coupling the hydrolysis of succinyl-CoA to the synthesis of ATP and thus represents the only step of substrate-level phosphorylation in the TCA. The beta subunit provides nucleotide specificity of the enzyme and binds the substrate succinate, while the binding sites for coenzyme A and phosphate are found in the alpha subunit. This chain is Succinate--CoA ligase [ADP-forming] subunit beta, hydrogenosomal, found in Trichomonas vaginalis.